A 232-amino-acid chain; its full sequence is MAKISKRRQAFAAKVDRQKLYAIEEALSLVKECASAKFDESIDVAVQLGIDAKKSDQVVRGSVVLPAGTGKSVRVAVFAQGEKAEQARAAGAEIVGMEDLAEQIKAGQMDFDIVIASPDTMRIVGTLGQILGPRGLMPNPKVGTVTPDVATAVKNAKAGQVQFRVDKAGIIHATIGRASFEPTALRSNLSALIEALQKAKPATSKGVYLRKIALSSTMGVGVRVDQGTLAAQ.

It belongs to the universal ribosomal protein uL1 family. Part of the 50S ribosomal subunit.

In terms of biological role, binds directly to 23S rRNA. The L1 stalk is quite mobile in the ribosome, and is involved in E site tRNA release. Its function is as follows. Protein L1 is also a translational repressor protein, it controls the translation of the L11 operon by binding to its mRNA. This is Large ribosomal subunit protein uL1 from Burkholderia lata (strain ATCC 17760 / DSM 23089 / LMG 22485 / NCIMB 9086 / R18194 / 383).